The following is a 318-amino-acid chain: MQLEVNNMWISFSVRYLVNVEDLNNVESAGNYVRHRRAPLVFKDKDSYTVTYVPAVSGEMIAHGYQMNLVELALQRNLPVDSLAKQGILIKRGSDDKVHEGTKCTDEKGSDYELCVINEDIVEDVAGFMNPNKLVKRTSNVAFSYMVPAIDAVKASTISSQFHVRYANKELMDKYKNENIQSLYNIETASASYVLTGYLNVNSVGKTQNYPVKEVDKKKDREKAALDALMLTLTQFLFGAKLTRFKPIVEIEALFVSASEKPFNLPPVTGDIKKYIDLVNSTTDSFAKILNIKRPVVKYYLKEEKGNVNTPIDAFTVM.

Belongs to the CRISPR-associated protein Cas7/Cst2/DevR family. Subtype I-a/Apern subfamily. In terms of assembly, part of the aCascade ribonucleoprotein complex, minimally composed of Csa2 and Cas5a, which binds crRNA. Other possible components of aCascade in strain P1 are Cas6b (SSO1437) and Csa5 (SSO1443), while SSO1399, Cas5b (SSO1400) and SSO1401 have sometimes been seen weakly associated. Csa2 is probably the major RNA-binding subunit. The Csa2-Cas5a-crRNA complex also binds target DNA homologous to crRNA, probably forming an R-loop. Purified aCascade forms a filament about 6 nm in width.

Functionally, CRISPR (clustered regularly interspaced short palindromic repeat) is an adaptive immune system that provides protection against mobile genetic elements (viruses, transposable elements and conjugative plasmids). CRISPR clusters contain spacers, sequences complementary to antecedent mobile elements, and target invading nucleic acids. CRISPR clusters are transcribed and processed into CRISPR RNA (crRNA). The polypeptide is CRISPR-associated protein Cas7/Csa2 1 (cas7a) (Saccharolobus solfataricus (strain ATCC 35092 / DSM 1617 / JCM 11322 / P2) (Sulfolobus solfataricus)).